We begin with the raw amino-acid sequence, 125 residues long: Small ribosomal subunit protein uS13 (125 aa).

Residues 92–125 (RRHLPVHGQRTKTNARTRKGPKKTVAGKKKAGKK) are disordered.

Belongs to the universal ribosomal protein uS13 family. Part of the 30S ribosomal subunit. Forms a loose heterodimer with protein S19. Forms two bridges to the 50S subunit in the 70S ribosome.

Functionally, located at the top of the head of the 30S subunit, it contacts several helices of the 16S rRNA. In the 70S ribosome it contacts the 23S rRNA (bridge B1a) and protein L5 of the 50S subunit (bridge B1b), connecting the 2 subunits; these bridges are implicated in subunit movement. Contacts the tRNAs in the A and P-sites. The chain is Small ribosomal subunit protein uS13 from Saccharopolyspora erythraea (strain ATCC 11635 / DSM 40517 / JCM 4748 / NBRC 13426 / NCIMB 8594 / NRRL 2338).